The following is a 132-amino-acid chain: Replication enhancer protein (132 aa).

The protein belongs to the geminiviridae replication enhancer protein family. In terms of assembly, homooligomer. Interacts with the replication-associated protein (REP). Interacts with host proliferating cell nuclear antigen (PCNA). Interacts with host retinoblastoma-related protein 1 (RBR1), and may thereby deregulate the host cell cycle. Oligomerization and interaction with PCNA are necessary for optimal replication enhancement.

Increases viral DNA accumulation. Enhances infectivity and symptom expression. This chain is Replication enhancer protein, found in Pepper huasteco yellow vein virus (PHYVV).